Here is a 120-residue protein sequence, read N- to C-terminus: Glycine cleavage system H protein (120 aa).

Positions 19-101 (DGTVGITDHA…YEGGWLFKLE (83 aa)) constitute a Lipoyl-binding domain. Lys-60 carries the post-translational modification N6-lipoyllysine.

Belongs to the GcvH family. The glycine cleavage system is composed of four proteins: P, T, L and H. (R)-lipoate is required as a cofactor.

Its function is as follows. The glycine cleavage system catalyzes the degradation of glycine. The H protein shuttles the methylamine group of glycine from the P protein to the T protein. This Deinococcus deserti (strain DSM 17065 / CIP 109153 / LMG 22923 / VCD115) protein is Glycine cleavage system H protein.